We begin with the raw amino-acid sequence, 725 residues long: 1,4-alpha-glucan branching enzyme GlgB (725 aa).

D406 (nucleophile) is an active-site residue. Residue E459 is the Proton donor of the active site.

This sequence belongs to the glycosyl hydrolase 13 family. GlgB subfamily. As to quaternary structure, monomer.

The catalysed reaction is Transfers a segment of a (1-&gt;4)-alpha-D-glucan chain to a primary hydroxy group in a similar glucan chain.. Its pathway is glycan biosynthesis; glycogen biosynthesis. Functionally, catalyzes the formation of the alpha-1,6-glucosidic linkages in glycogen by scission of a 1,4-alpha-linked oligosaccharide from growing alpha-1,4-glucan chains and the subsequent attachment of the oligosaccharide to the alpha-1,6 position. The sequence is that of 1,4-alpha-glucan branching enzyme GlgB from Methylobacillus flagellatus (strain ATCC 51484 / DSM 6875 / VKM B-1610 / KT).